We begin with the raw amino-acid sequence, 110 residues long: Protein YcgL (110 aa).

The region spanning 14 to 98 (MFCVIYRSSK…PPEDLLKQHL (85 aa)) is the YcgL domain. Residues 88–110 (PPPEDLLKQHLSSVGQNTSPADR) form a disordered region. Over residues 97–110 (HLSSVGQNTSPADR) the composition is skewed to polar residues.

The protein is Protein YcgL of Salmonella paratyphi A (strain ATCC 9150 / SARB42).